We begin with the raw amino-acid sequence, 188 residues long: UPF0398 protein OEOE_1093 (188 aa).

It belongs to the UPF0398 family.

The sequence is that of UPF0398 protein OEOE_1093 from Oenococcus oeni (strain ATCC BAA-331 / PSU-1).